The primary structure comprises 197 residues: Imidazoleglycerol-phosphate dehydratase (197 aa).

It belongs to the imidazoleglycerol-phosphate dehydratase family.

The protein localises to the cytoplasm. The enzyme catalyses D-erythro-1-(imidazol-4-yl)glycerol 3-phosphate = 3-(imidazol-4-yl)-2-oxopropyl phosphate + H2O. The protein operates within amino-acid biosynthesis; L-histidine biosynthesis; L-histidine from 5-phospho-alpha-D-ribose 1-diphosphate: step 6/9. The polypeptide is Imidazoleglycerol-phosphate dehydratase (Hahella chejuensis (strain KCTC 2396)).